Reading from the N-terminus, the 69-residue chain is Photosystem I reaction center subunit IV (69 aa).

Belongs to the PsaE family.

The protein resides in the cellular thylakoid membrane. Its function is as follows. Stabilizes the interaction between PsaC and the PSI core, assists the docking of the ferredoxin to PSI and interacts with ferredoxin-NADP oxidoreductase. The chain is Photosystem I reaction center subunit IV from Prochlorococcus marinus (strain MIT 9515).